We begin with the raw amino-acid sequence, 1349 residues long: Periaxin (1349 aa).

Ser7 is modified (phosphoserine). In terms of domain architecture, PDZ spans 16–99 (LVEIIVETEA…YKVSFCLKRT (84 aa)). The short motif at 70–84 (VFFENFKYEDALRLL) is the Nuclear export signal element. A Phosphoserine modification is found at Ser133. 41 consecutive repeat copies span residues 402–406 (PPEVK), 410–414 (GPEVK), 418–422 (VPEVK), 426–430 (MPEPV), 431–435 (LPEVR), 436–440 (LPEVE), 444–448 (VSEMK), 452–456 (VPEMA), 457–461 (VPEVR), 462–466 (LPEVQ), 467–471 (LPKVP), 472–476 (EMKLP), 477–481 (EVKLP), 485–489 (EMAVP), 493–497 (LPEVQ), 501–505 (VPEMK), 506–510 (LPEVK), 514–518 (VPEMA), 519–523 (VPEVR), 524–528 (LPEVQ), 532–536 (VPEMK), 537–549 (LPKV…PEMK), 553–557 (VPEMA), 558–562 (VPEVR), 563–567 (LPEVQ), 571–575 (VPEVK), 576–580 (LPEVK), 589–593 (VPEMA), 594–598 (VPEVH), 599–603 (LPEVQ), 612–616 (VPDVK), 617–621 (LPEVK), 622–626 (LPEIK), 630–634 (VPEMV), 635–639 (VPDVH), 643–647 (VHLPK), 648–652 (VSEMR), 653–657 (LPEVQ), 661–665 (VPEVH), 669–673 (APEVK), and 674–678 (LPKAP). The segment at 402–678 (PPEVKVPKGP…APEVKLPKAP (277 aa)) is 41 X 5 AA approximate tandem repeats of [LVMGIE]-[PSM]-[EDKA]-[LIVMA]-[AQKHPRT]; that may have a tripeptide spacer of [ALKD]-[IPV]-[KPH]. A phosphoserine mark is found at Ser794 and Ser974. Residues 1207 to 1218 (AKEGAEEGEKAK) show a composition bias toward basic and acidic residues. The tract at residues 1207–1349 (AKEGAEEGEK…RMEGAQAAVI (143 aa)) is disordered. The segment covering 1232-1242 (SEAVSGEGSPS) has biased composition (low complexity). Residues Ser1236, Ser1240, Ser1242, Ser1289, Ser1295, and Ser1327 each carry the phosphoserine modification.

Belongs to the periaxin family. Homodimer (via PDZ domain). Interacts with SCN10A. Found in a complex with SCN10A. Interacts with DRP2. Identified in a dystroglycan complex that contains at least PRX, DRP2, UTRN, DMD and DAG1. Detected in a complex composed of at least EZR, AHNAK, PPL and PRX. Identified in a complex with EZR, AHNAK, BFSP1, BFSP2, ANK2, PLEC, VIM and spectrin. Detected in eye lens (at protein level).

The protein localises to the nucleus. The protein resides in the cytoplasm. It is found in the cell membrane. Its subcellular location is the cell junction. It localises to the adherens junction. Functionally, scaffolding protein that functions as part of a dystroglycan complex in Schwann cells, and as part of EZR and AHNAK-containing complexes in eye lens fiber cells. Required for the maintenance of the peripheral myelin sheath that is essential for normal transmission of nerve impulses and normal perception of sensory stimuli. Required for normal transport of MBP mRNA from the perinuclear to the paranodal regions. Required for normal remyelination after nerve injury. Required for normal elongation of Schwann cells and normal length of the internodes between the nodes of Ranvier. The demyelinated nodes of Ranvier permit saltatory transmission of nerve impulses; shorter internodes cause slower transmission of nerve impulses. Required for the formation of appositions between the abaxonal surface of the myelin sheath and the Schwann cell plasma membrane; the Schwann cell cytoplasm is restricted to regions between these appositions. Required for the formation of Cajal bands and of Schmidt-Lanterman incisures that correspond to short, cytoplasm-filled regions on myelinated nerves. Recruits DRP2 to the Schwann cell plasma membrane. Required for normal protein composition of the eye lens fiber cell plasma membrane and normal eye lens fiber cell morphology. The protein is Periaxin (PRX) of Bos taurus (Bovine).